A 206-amino-acid polypeptide reads, in one-letter code: Probable GTP-binding protein EngB (206 aa).

Positions Gln23–Tyr197 constitute an EngB-type G domain. Residues Gly31–Ser38, Gly58–Leu62, Asp76–Gly79, Thr143–Asp146, and Phe176–Ser178 each bind GTP. The Mg(2+) site is built by Ser38 and Thr60.

It belongs to the TRAFAC class TrmE-Era-EngA-EngB-Septin-like GTPase superfamily. EngB GTPase family. The cofactor is Mg(2+).

Its function is as follows. Necessary for normal cell division and for the maintenance of normal septation. This Pseudoalteromonas atlantica (strain T6c / ATCC BAA-1087) protein is Probable GTP-binding protein EngB.